The following is a 479-amino-acid chain: Alliin lyase (479 aa).

The first 25 residues, 1-25 (MESYDKVGSNKVPCLLILTCIIMSS), serve as a signal peptide directing secretion. A propeptide spanning residues 26 to 34 (FVNNNIVQA) is cleaved from the precursor. Residues 47 to 93 (EAVANINCSGHGRAFLDGILSDGSPKCECNTCYTGADCSEKITGCSA) enclose the EGF-like; atypical domain. Residue Asn53 is glycosylated (N-linked (GlcNAc...) asparagine). Cystine bridges form between Cys54–Cys73, Cys75–Cys84, and Cys78–Cys91. 126-134 (YFFNPVSNF) is a binding site for chloride. N-linked (GlcNAc...) asparagine glycosylation is found at Asn180 and Asn225. N6-(pyridoxal phosphate)lysine is present on Lys285. Residues Asn342 and Asn362 are each glycosylated (N-linked (GlcNAc...) asparagine). Cys402 and Cys410 are joined by a disulfide.

This sequence belongs to the alliinase family. Homodimer. Pyridoxal 5'-phosphate is required as a cofactor.

It localises to the vacuole. It catalyses the reaction an S-alkyl-L-cysteine S-oxide = an S-alkyl sulfenate + 2-aminoprop-2-enoate. This Allium cepa (Onion) protein is Alliin lyase.